A 429-amino-acid polypeptide reads, in one-letter code: Histidine--tRNA ligase (429 aa).

Belongs to the class-II aminoacyl-tRNA synthetase family. Homodimer.

It is found in the cytoplasm. The enzyme catalyses tRNA(His) + L-histidine + ATP = L-histidyl-tRNA(His) + AMP + diphosphate + H(+). The chain is Histidine--tRNA ligase from Pseudomonas fluorescens (strain Pf0-1).